The primary structure comprises 105 residues: Small ribosomal subunit protein uS10 (105 aa).

Belongs to the universal ribosomal protein uS10 family. As to quaternary structure, part of the 30S ribosomal subunit.

Functionally, involved in the binding of tRNA to the ribosomes. This chain is Small ribosomal subunit protein uS10, found in Rickettsia bellii (strain OSU 85-389).